Here is a 144-residue protein sequence, read N- to C-terminus: Large ribosomal subunit protein uL15 (144 aa).

The segment at 1–53 is disordered; the sequence is MRLNSLSPAEGAKHSAKRLGRGIGSGLGKTGGRGHKGQKSRTGGGVRRGFEGG. Residues 21–31 show a composition bias toward gly residues; the sequence is RGIGSGLGKTG.

The protein belongs to the universal ribosomal protein uL15 family. Part of the 50S ribosomal subunit.

In terms of biological role, binds to the 23S rRNA. In Glaesserella parasuis serovar 5 (strain SH0165) (Haemophilus parasuis), this protein is Large ribosomal subunit protein uL15.